The chain runs to 785 residues: Pre-rRNA-processing protein TSR1 homolog (785 aa).

Residues 1 to 59 (MSTTGHRAGVFKKPSKPHKSWKGKRTKGEITSENRGREGVKQLTRSAHSTHRTISKDAR) are disordered. Basic residues predominate over residues 9–25 (GVFKKPSKPHKSWKGKR). Residues 26 to 40 (TKGEITSENRGREGV) are compositionally biased toward basic and acidic residues. The 161-residue stretch at 83–243 (APCLVTVVSL…LRILNETKKK (161 aa)) folds into the Bms1-type G domain. The tract at residues 307–426 (PHPLKAHNKT…GETTASEMMF (120 aa)) is disordered. Acidic residues predominate over residues 376-409 (LDDEDDEDEEDSDEDMDDSDNEEVEDDSEEEEPM).

It belongs to the TRAFAC class translation factor GTPase superfamily. Bms1-like GTPase family. TSR1 subfamily.

The protein resides in the nucleus. It is found in the nucleolus. Its function is as follows. Required during maturation of the 40S ribosomal subunit in the nucleolus. In Caenorhabditis elegans, this protein is Pre-rRNA-processing protein TSR1 homolog (tag-151).